Reading from the N-terminus, the 153-residue chain is Methylglyoxal synthase (153 aa).

The 148-residue stretch at 6–153 folds into the MGS-like domain; the sequence is RTIAARKHIA…QRYLAERLPS (148 aa). Residues His-19, Lys-23, 45 to 48, and 65 to 66 contribute to the substrate site; these read TGTT and SG. Asp-71 serves as the catalytic Proton donor/acceptor. His-98 is a substrate binding site.

It belongs to the methylglyoxal synthase family.

It carries out the reaction dihydroxyacetone phosphate = methylglyoxal + phosphate. Catalyzes the formation of methylglyoxal from dihydroxyacetone phosphate. This chain is Methylglyoxal synthase, found in Sodalis glossinidius (strain morsitans).